A 61-amino-acid chain; its full sequence is Small ribosomal subunit protein uS14 (61 aa).

Zn(2+)-binding residues include C24, C27, C40, and C43.

The protein belongs to the universal ribosomal protein uS14 family. Zinc-binding uS14 subfamily. In terms of assembly, part of the 30S ribosomal subunit. Contacts proteins S3 and S10. Zn(2+) serves as cofactor.

Its function is as follows. Binds 16S rRNA, required for the assembly of 30S particles and may also be responsible for determining the conformation of the 16S rRNA at the A site. This chain is Small ribosomal subunit protein uS14, found in Heliobacterium modesticaldum (strain ATCC 51547 / Ice1).